A 353-amino-acid chain; its full sequence is Photosystem II D2 protein (353 aa).

At Thr2 the chain carries N-acetylthreonine. Thr2 is modified (phosphothreonine). The helical transmembrane segment at 41–61 (CAYFALGGWFTGTTFVTSWYT) threads the bilayer. A chlorophyll a-binding site is contributed by His118. A helical membrane pass occupies residues 125-141 (GFMLRQFELARSVQLRP). Pheophytin a is bound by residues Gln130 and Asn143. The helical transmembrane segment at 153 to 166 (VFVSVFLIYPLGQS) threads the bilayer. Residue His198 coordinates chlorophyll a. Residues 208 to 228 (AALLCAIHGATVENTLFEDGD) form a helical membrane-spanning segment. 2 residues coordinate a plastoquinone: His215 and Phe262. His215 serves as a coordination point for Fe cation. His269 serves as a coordination point for Fe cation. A helical membrane pass occupies residues 279–295 (GLWMSALGVVGLALNLR).

The protein belongs to the reaction center PufL/M/PsbA/D family. PSII is composed of 1 copy each of membrane proteins PsbA, PsbB, PsbC, PsbD, PsbE, PsbF, PsbH, PsbI, PsbJ, PsbK, PsbL, PsbM, PsbT, PsbX, PsbY, PsbZ, Psb30/Ycf12, at least 3 peripheral proteins of the oxygen-evolving complex and a large number of cofactors. It forms dimeric complexes. The D1/D2 heterodimer binds P680, chlorophylls that are the primary electron donor of PSII, and subsequent electron acceptors. It shares a non-heme iron and each subunit binds pheophytin, quinone, additional chlorophylls, carotenoids and lipids. There is also a Cl(-1) ion associated with D1 and D2, which is required for oxygen evolution. The PSII complex binds additional chlorophylls, carotenoids and specific lipids. is required as a cofactor.

It localises to the plastid. Its subcellular location is the chloroplast thylakoid membrane. The enzyme catalyses 2 a plastoquinone + 4 hnu + 2 H2O = 2 a plastoquinol + O2. Photosystem II (PSII) is a light-driven water:plastoquinone oxidoreductase that uses light energy to abstract electrons from H(2)O, generating O(2) and a proton gradient subsequently used for ATP formation. It consists of a core antenna complex that captures photons, and an electron transfer chain that converts photonic excitation into a charge separation. The D1/D2 (PsbA/PsbD) reaction center heterodimer binds P680, the primary electron donor of PSII as well as several subsequent electron acceptors. D2 is needed for assembly of a stable PSII complex. The sequence is that of Photosystem II D2 protein from Coffea arabica (Arabian coffee).